A 425-amino-acid polypeptide reads, in one-letter code: Putative nucleoside transporter YegT (425 aa).

Topologically, residues 1 to 8 (MKTTAKLS) are periplasmic. The helical transmembrane segment at 9-29 (FMMFVEWFIWGAWFVPLWLWL) threads the bilayer. The Cytoplasmic segment spans residues 30–38 (SKSGFSAGE). The chain crosses the membrane as a helical span at residues 39–59 (IGWSYACTAIAAILSPILVGS). Over 60-63 (ITDR) the chain is Periplasmic. A helical membrane pass occupies residues 64–84 (FFSAQKVLAVLMFAGALLMYF). Residues 85-90 (AAQQTT) lie on the Cytoplasmic side of the membrane. The chain crosses the membrane as a helical span at residues 91–111 (FAGFFPLLLAYSLTYMPTIAL). Residues 112-131 (TNSIAFANVPDVERDFPRIR) are Periplasmic-facing. The helical transmembrane segment at 132–152 (VMGTIGWIASGLACGFLPQIL) threads the bilayer. Residues 153-161 (GYADISPTN) are Cytoplasmic-facing. A helical membrane pass occupies residues 162-182 (IPLLITAGSSALLGVFAFFLP). Residues 183–210 (DTPPKSTGKMDIKVMLGLDALILLRDKN) are Periplasmic-facing. Residues 211–231 (FLVFFFCSFLFAMPLAFYYIF) traverse the membrane as a helical segment. The Cytoplasmic segment spans residues 232-244 (ANGYLTEVGMKNA). A helical membrane pass occupies residues 245-265 (TGWMTLGQFSEIFFMLALPFF). Topologically, residues 266–287 (TKRFGIKKVLLLGLVTAAIRYG) are periplasmic. A helical membrane pass occupies residues 288–308 (FFIYGSADEYFTYALLFLGIL). The Cytoplasmic portion of the chain corresponds to 309 to 339 (LHGVSYDFYYVTAYIYVDKKAPVHMRTAAQG). A helical transmembrane segment spans residues 340–360 (LITLCCQGFGSLLGYRLGGVM). Residues 361–379 (MEKMFAYQEPVNGLTFNWS) lie on the Periplasmic side of the membrane. A helical membrane pass occupies residues 380-400 (GMWTFGAVMIAIIAVLFMIFF). At 401–425 (RESDNEITAIKVDDRDIALTQGEVK) the chain is on the cytoplasmic side.

Belongs to the major facilitator superfamily. Nucleoside:H(+) symporter (NHS) (TC 2.A.1.10) family.

Its subcellular location is the cell inner membrane. Could be involved in nucleoside transport. This is Putative nucleoside transporter YegT (yegT) from Escherichia coli (strain K12).